Reading from the N-terminus, the 265-residue chain is Mlc titration factor A (265 aa).

Zn(2+) contacts are provided by His111, His148, His152, and Glu211.

Belongs to the MtfA family. Interacts with Mlc. Zn(2+) is required as a cofactor.

Its subcellular location is the cytoplasm. Functionally, involved in the modulation of the activity of the glucose-phosphotransferase system (glucose-PTS). Interacts with the transcriptional repressor Mlc, preventing its interaction with DNA and leading to the modulation of expression of genes regulated by Mlc, including ptsG, which encodes the PTS system glucose-specific EIICB component. Its function is as follows. Shows zinc-dependent metallopeptidase activity. This Shigella dysenteriae serotype 1 (strain Sd197) protein is Mlc titration factor A.